A 441-amino-acid chain; its full sequence is MGEWVIGAFINIFGSVAINFGTNLLKLGHNERERLALQDGGGKMPLKPIIHNQTWRVGILVFLLGNCLNFISFGYAAQSLLAALGSIQFVSNIAFAYVVLNKMVTVKVLVATAFIVLGNVFLVAFGNHQSPVFTPEQLAEKYSNVTFLVYCGILILIVAVHHFLYRKGEVLISTPGQEISSYWKMLLPFSYAVVSGAIGSCSVLFAKSLSNLLRLAMSSSYQLHSWFTYSMLLLFLSTAGFWMTRLNEGLSLYDAILIVPMFQIAWTFFSICTGCIYFQEFQVFDALRTTMFILGMMCVFIGISLLAPDDTRGNETKDNSSSLDSIVSSSVPTEEDRLIPQSSEDGHSKDTRVVVQGMYMKAADLIAKTKTACLAALGFGEDSINASAILVMPMVSSKITGFRGNGLERAKILSMRGSGWSKLAMEEEGTRMLEKTISSKA.

The Extracellular portion of the chain corresponds to 1-4 (MGEW). A helical transmembrane segment spans residues 5-25 (VIGAFINIFGSVAINFGTNLL). The Cytoplasmic portion of the chain corresponds to 26–56 (KLGHNERERLALQDGGGKMPLKPIIHNQTWR). The helical transmembrane segment at 57-77 (VGILVFLLGNCLNFISFGYAA) threads the bilayer. The Extracellular segment spans residues 78 to 79 (QS). Residues 80–100 (LLAALGSIQFVSNIAFAYVVL) traverse the membrane as a helical segment. Residues 101 to 105 (NKMVT) are Cytoplasmic-facing. A helical membrane pass occupies residues 106–126 (VKVLVATAFIVLGNVFLVAFG). At 127–144 (NHQSPVFTPEQLAEKYSN) the chain is on the extracellular side. The helical transmembrane segment at 145–165 (VTFLVYCGILILIVAVHHFLY) threads the bilayer. Residues 166–184 (RKGEVLISTPGQEISSYWK) are Cytoplasmic-facing. Residues 185–205 (MLLPFSYAVVSGAIGSCSVLF) form a helical membrane-spanning segment. Residues 206–222 (AKSLSNLLRLAMSSSYQ) lie on the Extracellular side of the membrane. A helical membrane pass occupies residues 223 to 243 (LHSWFTYSMLLLFLSTAGFWM). Residues 244–255 (TRLNEGLSLYDA) lie on the Cytoplasmic side of the membrane. The helical transmembrane segment at 256–276 (ILIVPMFQIAWTFFSICTGCI) threads the bilayer. Over 277 to 288 (YFQEFQVFDALR) the chain is Extracellular. Residues 289–309 (TTMFILGMMCVFIGISLLAPD) form a helical membrane-spanning segment. Residues 310-441 (DTRGNETKDN…MLEKTISSKA (132 aa)) are Cytoplasmic-facing. Residues 313 to 347 (GNETKDNSSSLDSIVSSSVPTEEDRLIPQSSEDGH) are disordered. Residues 320 to 330 (SSSLDSIVSSS) are compositionally biased toward low complexity. The span at 334–347 (EEDRLIPQSSEDGH) shows a compositional bias: basic and acidic residues.

Belongs to the NIPA (TC 2.A.7) family. Homodimer.

Its subcellular location is the cell membrane. The protein resides in the early endosome. Acts as a Mg(2+) transporter. Can also transport other divalent cations such as Fe(2+), Sr(2+), Ba(2+), Mn(2+) and Co(2+) but to a much less extent than Mg(2+). The chain is Probable magnesium transporter NIPA8 from Arabidopsis thaliana (Mouse-ear cress).